The chain runs to 441 residues: Xylose isomerase (441 aa).

Active-site residues include H100 and D103. 7 residues coordinate Mg(2+): E231, E267, H270, D295, D306, D308, and D338.

The protein belongs to the xylose isomerase family. As to quaternary structure, homotetramer. It depends on Mg(2+) as a cofactor.

The protein resides in the cytoplasm. It catalyses the reaction alpha-D-xylose = alpha-D-xylulofuranose. The chain is Xylose isomerase from Paraburkholderia phymatum (strain DSM 17167 / CIP 108236 / LMG 21445 / STM815) (Burkholderia phymatum).